The sequence spans 896 residues: Protein bride of sevenless (896 aa).

An N-terminal signal peptide occupies residues 1–31; that stretch reads MKVMDALQSGRRKPLPVALLCILVTVFCVLE. The Extracellular portion of the chain corresponds to 32–530; sequence CHGADLTSPT…MFWRIKMDTW (499 aa). The segment at 38–84 is disordered; the sequence is TSPTKKSAPLRITKPQPTSQQAKPISITTRAPTTVASTTDDEVSSSV. The span at 52-64 shows a compositional bias: polar residues; the sequence is PQPTSQQAKPISI. A compositionally biased stretch (low complexity) spans 65–84; that stretch reads TTRAPTTVASTTDDEVSSSV. Asn183, Asn307, Asn474, and Asn485 each carry an N-linked (GlcNAc...) asparagine glycan. Transmembrane regions (helical) follow at residues 531-554, 570-588, 615-637, 655-676, 693-712, 728-748, and 759-781; these read VATGLTAAILGLIATLAILVFIVV, ILLLLSLILVFCSFVPYSI, VFIMTLVYCFVFSLLLCRAVMLA, AVICAFSVVAQVGMSVQLLVVM, WLWGLLAYDFALLCCVGALI, IVIGSVLIMVIWVAWIALSLF, and LGLQASGWAVLVGILIPRTFLIV. The Cytoplasmic portion of the chain corresponds to 782–896; the sequence is RGIERSDIAQ…SPDHNKITRF (115 aa). 2 disordered regions span residues 825-844 and 861-896; these read SQDEVNHQSPSEIPTLPLRG and ANINPQRPPPRPQQSPSRSSVSSLPPSPDHNKITRF. The span at 874 to 884 shows a compositional bias: low complexity; sequence QSPSRSSVSSL.

Belongs to the G-protein coupled receptor 3 family. As to expression, expressed exclusively by R8 photoreceptor cells and is internalized in a sev-dependent manner by R7 cells.

It is found in the cell membrane. In terms of biological role, acts as a ligand for sevenless tyrosine-kinase receptor during eye development. This chain is Protein bride of sevenless (boss), found in Drosophila melanogaster (Fruit fly).